Reading from the N-terminus, the 296-residue chain is Large ribosomal subunit protein uL29m (296 aa).

A mitochondrion-targeting transit peptide spans Met1 to Thr19.

The protein belongs to the universal ribosomal protein uL29 family. As to quaternary structure, component of the mitochondrial large ribosomal subunit. Mature mitochondrial ribosomes consist of a small (37S) and a large (54S) subunit. The 37S subunit contains at least 33 different proteins and 1 molecule of RNA (15S). The 54S subunit contains at least 45 different proteins and 1 molecule of RNA (21S).

Its subcellular location is the mitochondrion. In Lodderomyces elongisporus (strain ATCC 11503 / CBS 2605 / JCM 1781 / NBRC 1676 / NRRL YB-4239) (Yeast), this protein is Large ribosomal subunit protein uL29m (MRPL4).